The following is a 134-amino-acid chain: Neuropeptide-like peptide 11 (134 aa).

The N-terminal stretch at 1 to 20 is a signal peptide; sequence MMSTLALVSLAIFGIAVVCA. The propeptide occupies 21–106; sequence APKPATVPVA…YNRLIDAGKK (86 aa). The residue at position 131 (Ala131) is an Alanine amide.

The protein is Neuropeptide-like peptide 11 (nlp-11) of Caenorhabditis elegans.